A 349-amino-acid polypeptide reads, in one-letter code: CCN family member 2 (349 aa).

The first 26 residues, 1–26 (MSATGLGPVRCAFVLLLALCSRPASS), serve as a signal peptide directing secretion. Residues 27 to 98 (QDCSAPCQCP…NRKIGVCTAK (72 aa)) enclose the IGFBP N-terminal domain. Disulfide bonds link C29–C54, C33–C56, C35–C57, C43–C60, C68–C82, and C74–C95. Positions 101–167 (APCVFGGTVY…GKCCEEWVCD (67 aa)) constitute a VWFC domain. A TSP type-1 domain is found at 198 to 243 (NCLVQTTEWSACSKTCGMGISTRVTNDNAFCRLEKQSRLCMVRPCE). Positions 247–349 (EENIKKGKKC…YYRKMYGDMA (103 aa)) are heparin-binding. 5 disulfides stabilise this stretch: C256-C293, C273-C307, C284-C323, C287-C325, and C292-C329. Residues 256–330 (CIRTPKISKP…KTCACHYNCP (75 aa)) form the CTCK domain.

Belongs to the CCN family. As to quaternary structure, monomer. Interacts with TSKU.

It is found in the secreted. It localises to the extracellular space. The protein localises to the extracellular matrix. Functionally, major connective tissue mitoattractant secreted by vascular endothelial cells. Promotes proliferation and differentiation of chondrocytes. Is involved in the stimulation of osteoblast differentiation and has a critical role in osteogenesis. Mediates heparin- and divalent cation-dependent cell adhesion in many cell types including fibroblasts, myofibroblasts, endothelial and epithelial cells. Enhances fibroblast growth factor-induced DNA synthesis. The protein is CCN family member 2 (CCN2) of Bos taurus (Bovine).